A 192-amino-acid polypeptide reads, in one-letter code: Cytochrome b-245 light chain (192 aa).

Residues 2–7 (GQIEWA) are Cytoplasmic-facing. A helical transmembrane segment spans residues 8–30 (MWANEQALASGLILITGGIVATA). Residues 31 to 35 (GRFTQ) are Extracellular-facing. A helical membrane pass occupies residues 36–53 (WYFGAYSIAAGVLICLLE). The Cytoplasmic portion of the chain corresponds to 54–69 (YPRGKRKKGSTMERCG). The stretch at 70–80 (QKYLTSVVKLF) is an intramembrane region. Residues 81–86 (GPLTRN) lie on the Cytoplasmic side of the membrane. A helical transmembrane segment spans residues 87–104 (YYVRAALHFLLSVPAGFL). Residue L105 is a topological domain, extracellular. Residues 106–126 (ATILGTVCLAIASVIYLLAAI) form a helical membrane-spanning segment. At 127 to 192 (RGEQWTPIEP…NPMPVTDEVV (66 aa)) the chain is on the cytoplasmic side. Residues 134-192 (IEPKPKERPQVGGTIKQPPTNPPPRPPAEVRKKPSEGEEEAASAGGPQVNPMPVTDEVV) are disordered. T147 carries the phosphothreonine modification. K149 is covalently cross-linked (Glycyl lysine isopeptide (Lys-Gly) (interchain with G-Cter in ubiquitin)). Phosphoserine is present on residues S168 and S176.

This sequence belongs to the p22phox family. Component of the phagocyte NADPH oxidase core complex/cytochrome b558 complex, composed of CYBB (heavy chain (beta)) and CYBA (light chain (alpha)). Component of the phagocyte NADPH oxidase complex composed of an obligatory core heterodimer formed by the membrane proteins CYBA and CYBB and the cytosolic regulatory subunits NCF1/p47-phox, NCF2/p67-phox, NCF4/p40-phox and the small GTPase RAC1 or RAC2. Interacts with NCF1 (via SH3 domain). Interacts with SH3PXD2A. Interacts with DUOX1, DUOX2 and TPO. Interacts with NOX4; this interaction mediates superoxide generation. Interacts with calprotectin (S100A8/9). Interacts with GBP7. Interacts with NOXO1. Forms a heterodimer with NOX3 and is essential for activity and cell membrane localization of NOX3. Interacts with NOX1. In terms of processing, ubiquitinated at Lys-149 likely by RNF145. Post-translationally, phosphorylation at Thr-147 enhances NADPH oxidase activity by promoting NCF1/p47-phox binding. In terms of tissue distribution, the strongest level of expression is found in kidney, peritoneal neutrophils and peritoneal macrophages, and a lower level in spleen and small intestine. Very low level of expression can be noted in brain, liver, testis, and heart.

The protein localises to the cell membrane. Subunit of NADPH oxidase complexes that is required for the NADPH oxidase activity that generates, in various cell types, superoxide from molecular oxygen utilizing NADPH as an electron donor. Subunit of the phagocyte NADPH oxidase complex that mediates the transfer of electrons from cytosolic NADPH to O2 to produce the superoxide anion (O2(-)). In the activated complex, electrons are first transferred from NADPH to flavin adenine dinucleotide (FAD) and subsequently transferred via two heme molecules to molecular oxygen, producing superoxide through an outer-sphere reaction. Activation of the NADPH oxidase complex is initiated by the assembly of cytosolic subunits of the NADPH oxidase complex with the core NADPH oxidase complex to form a complex at the plasma membrane or phagosomal membrane. This activation process is initiated by phosphorylation dependent binding of the cytosolic NCF1/p47-phox subunit to the C-terminus of CYBA/p22-phox. Aassociates with NOX3 to form a functional NADPH oxidase constitutively generating superoxide. This is Cytochrome b-245 light chain from Mus musculus (Mouse).